The sequence spans 170 residues: MDLKQYITIVPDFPKPGIMFKDITTLMDNGPAYKYATDQIVQYAREKQIEIVVGPEARGFIIGCPVAYALGVGFAPVRKEGKLPREVVRVEYGLEYGTDVLTMHKDAIKPGQRVLITDDLLATGGTMRATIDLVEQLGGVVAGLAFLIELTELGGRKKLEGYDILTLMQF.

It belongs to the purine/pyrimidine phosphoribosyltransferase family. In terms of assembly, homodimer.

Its subcellular location is the cytoplasm. The catalysed reaction is AMP + diphosphate = 5-phospho-alpha-D-ribose 1-diphosphate + adenine. It functions in the pathway purine metabolism; AMP biosynthesis via salvage pathway; AMP from adenine: step 1/1. In terms of biological role, catalyzes a salvage reaction resulting in the formation of AMP, that is energically less costly than de novo synthesis. The sequence is that of Adenine phosphoribosyltransferase from Geobacillus kaustophilus (strain HTA426).